A 548-amino-acid polypeptide reads, in one-letter code: Chaperonin GroEL (548 aa).

ATP-binding positions include 30 to 33 (TLGP), Lys-51, 87 to 91 (DGTTT), Gly-415, 479 to 481 (NAA), and Asp-495.

Belongs to the chaperonin (HSP60) family. As to quaternary structure, forms a cylinder of 14 subunits composed of two heptameric rings stacked back-to-back. Interacts with the co-chaperonin GroES.

Its subcellular location is the cytoplasm. It carries out the reaction ATP + H2O + a folded polypeptide = ADP + phosphate + an unfolded polypeptide.. Its function is as follows. Together with its co-chaperonin GroES, plays an essential role in assisting protein folding. The GroEL-GroES system forms a nano-cage that allows encapsulation of the non-native substrate proteins and provides a physical environment optimized to promote and accelerate protein folding. The polypeptide is Chaperonin GroEL (Serratia proteamaculans (strain 568)).